A 1221-amino-acid polypeptide reads, in one-letter code: DNA-directed RNA polymerase subunit beta (1221 aa).

The disordered stretch occupies residues 1176-1221 (EKKKLAEEEAEIAAEAEAEGSAEGDAAEADADANEAETADDDKASK). Residues 1183-1215 (EEAEIAAEAEAEGSAEGDAAEADADANEAETAD) show a composition bias toward acidic residues.

The protein belongs to the RNA polymerase beta chain family. In terms of assembly, the RNAP catalytic core consists of 2 alpha, 1 beta, 1 beta' and 1 omega subunit. When a sigma factor is associated with the core the holoenzyme is formed, which can initiate transcription.

The enzyme catalyses RNA(n) + a ribonucleoside 5'-triphosphate = RNA(n+1) + diphosphate. In terms of biological role, DNA-dependent RNA polymerase catalyzes the transcription of DNA into RNA using the four ribonucleoside triphosphates as substrates. In Lactobacillus delbrueckii subsp. bulgaricus (strain ATCC 11842 / DSM 20081 / BCRC 10696 / JCM 1002 / NBRC 13953 / NCIMB 11778 / NCTC 12712 / WDCM 00102 / Lb 14), this protein is DNA-directed RNA polymerase subunit beta.